We begin with the raw amino-acid sequence, 334 residues long: L-lactate dehydrogenase B chain (334 aa).

Ala2 carries the N-acetylalanine modification. An N6-acetyllysine modification is found at Lys7. Phosphoserine is present on Ser44. NAD(+) contacts are provided by residues 53 to 58 (DVLEDK) and Arg100. Residue Lys58 is modified to N6-acetyllysine. Arg107 contributes to the substrate binding site. Lys119 is subject to N6-acetyllysine. Asn139 is a binding site for NAD(+). Substrate-binding residues include Asn139 and Arg170. The Proton acceptor role is filled by His194. Tyr240 is subject to Phosphotyrosine. Residue Thr249 participates in substrate binding. At Lys329 the chain carries N6-acetyllysine.

This sequence belongs to the LDH/MDH superfamily. LDH family. Homotetramer. Interacts with PTEN upstream reading frame protein MP31; the interaction leads to inhibition of mitochondrial lactate dehydrogenase activity, preventing conversion of lactate to pyruvate in mitochondria.

The protein localises to the cytoplasm. Its subcellular location is the mitochondrion inner membrane. The catalysed reaction is (S)-lactate + NAD(+) = pyruvate + NADH + H(+). Its pathway is fermentation; pyruvate fermentation to lactate; (S)-lactate from pyruvate: step 1/1. Its function is as follows. Interconverts simultaneously and stereospecifically pyruvate and lactate with concomitant interconversion of NADH and NAD(+). In Bos taurus (Bovine), this protein is L-lactate dehydrogenase B chain (LDHB).